Consider the following 172-residue polypeptide: Phosphopantetheine adenylyltransferase (172 aa).

T13 lines the substrate pocket. ATP contacts are provided by residues 13-14 (TF) and H21. Residues K45, L81, and R95 each contribute to the substrate site. Residues 96–98 (GLR), E106, and 131–137 (SQFISSR) each bind ATP.

The protein belongs to the bacterial CoaD family. As to quaternary structure, homohexamer. Requires Mg(2+) as cofactor.

Its subcellular location is the cytoplasm. The enzyme catalyses (R)-4'-phosphopantetheine + ATP + H(+) = 3'-dephospho-CoA + diphosphate. The protein operates within cofactor biosynthesis; coenzyme A biosynthesis; CoA from (R)-pantothenate: step 4/5. Its function is as follows. Reversibly transfers an adenylyl group from ATP to 4'-phosphopantetheine, yielding dephospho-CoA (dPCoA) and pyrophosphate. This is Phosphopantetheine adenylyltransferase from Rhodospirillum rubrum (strain ATCC 11170 / ATH 1.1.1 / DSM 467 / LMG 4362 / NCIMB 8255 / S1).